Reading from the N-terminus, the 510-residue chain is MLRICVKRPCIKIVLSQVRPALLVRKENLHISTGVKVEKSSIINQKDPNKVRVEINELKRQAEIEKAAIKELEKNPQYQKLAEAFNSHDHVHLRESETEQNDIISLGTIRDYKSSKCEQADKPSSLNLHSHTHSHGHTHSHAAHNPLLVLSTEQIRKNAGVRITWVGLGVNVGIAIGKFFGGIVFHSQALFADAIHAISDMVSDLLTLLSVGLAANKPTADYPYGYGKIETVGSLAVSTILAMAGISIGWSSLCALVGPVIPHTIIDTIGNLGHAHTYSEDIIEDVTDINAAWIAAASIAAKEWIFRATRKIAINTNSNVLMANAWHHRVDSLTSLVALVAISTGYLVNIQSLDTIGGLIVSGLIIKAGGEGMCIAIKELIDQSVSRDDPRYLEIETLVKDTLNKLISNNNSQKPYGLKELTLLSSGPNLRGHLTLEVPLQKWGNILGVNEFEIVTHHLRNVLTNEVSNLRRLDIEYVEEKNGEENEHIKGQQNYKEDVLIKHDHTNTHI.

Residues 120–141 form a disordered region; it reads ADKPSSLNLHSHTHSHGHTHSH. A compositionally biased stretch (basic residues) spans 130–141; it reads SHTHSHGHTHSH. A run of 6 helical transmembrane segments spans residues 165-185, 194-214, 241-261, 286-306, 333-353, and 356-376; these read WVGL…GIVF, AIHA…VGLA, LAMA…GPVI, VTDI…EWIF, LTSL…IQSL, and IGGL…MCIA.

The protein belongs to the cation diffusion facilitator (CDF) transporter (TC 2.A.4) family. SLC30A subfamily.

It is found in the mitochondrion membrane. Its function is as follows. Mitochondrial metal transporter involved in mitochondrial iron accumulation. In Saccharomyces cerevisiae (strain ATCC 204508 / S288c) (Baker's yeast), this protein is Mitochondrial metal transporter 1 (MMT1).